Reading from the N-terminus, the 467-residue chain is UDP-N-acetylmuramate--L-alanine ligase (467 aa).

ATP is bound at residue 114 to 120 (GTHGKTT).

It belongs to the MurCDEF family.

The protein localises to the cytoplasm. It catalyses the reaction UDP-N-acetyl-alpha-D-muramate + L-alanine + ATP = UDP-N-acetyl-alpha-D-muramoyl-L-alanine + ADP + phosphate + H(+). Its pathway is cell wall biogenesis; peptidoglycan biosynthesis. In terms of biological role, cell wall formation. The protein is UDP-N-acetylmuramate--L-alanine ligase of Azorhizobium caulinodans (strain ATCC 43989 / DSM 5975 / JCM 20966 / LMG 6465 / NBRC 14845 / NCIMB 13405 / ORS 571).